The sequence spans 106 residues: Thioredoxin (106 aa).

The region spanning 2-106 is the Thioredoxin domain; that stretch reads VQVISNLDEF…LESLVQKSLA (105 aa). Active-site nucleophile residues include C30 and C33. An intrachain disulfide couples C30 to C33.

The protein belongs to the thioredoxin family.

Participates in various redox reactions through the reversible oxidation of its active center dithiol to a disulfide and catalyzes dithiol-disulfide exchange reactions. This Coprinus comatus (Shaggy mane) protein is Thioredoxin.